Reading from the N-terminus, the 132-residue chain is MAKEFSRTQRVAQEMQKEIAIIIQREVKDPRIGMATVSGVEVSRDLAYAKVFVTFLNDNEPEQVKIAVKALQDASGFIRMMIGKAMRLRVVPELTFSYDNSLVEGMRMSNLVTNVVRNDTERRSVTGEDQED.

Belongs to the RbfA family. Monomer. Binds 30S ribosomal subunits, but not 50S ribosomal subunits or 70S ribosomes.

It is found in the cytoplasm. Functionally, one of several proteins that assist in the late maturation steps of the functional core of the 30S ribosomal subunit. Associates with free 30S ribosomal subunits (but not with 30S subunits that are part of 70S ribosomes or polysomes). Required for efficient processing of 16S rRNA. May interact with the 5'-terminal helix region of 16S rRNA. The polypeptide is Ribosome-binding factor A (Pectobacterium atrosepticum (strain SCRI 1043 / ATCC BAA-672) (Erwinia carotovora subsp. atroseptica)).